We begin with the raw amino-acid sequence, 1050 residues long: Probable E3 ubiquitin-protein ligase HERC3 (1050 aa).

RCC1 repeat units follow at residues 1-51 (MLCW…FLLE), 52-101 (DGEV…ALSD), 102-154 (RGQL…ALAA), 156-207 (GQFF…ALSL), 208-259 (SGAV…VLTK), 261-311 (GGVF…AFVP), and 313-366 (SGLI…IVKQ). In terms of domain architecture, HECT spans 951-1050 (YKGDYSATHP…LDNYEGFSLA (100 aa)). Catalysis depends on Cys-1018, which acts as the Glycyl thioester intermediate.

Post-translationally, ubiquitinated; which promotes degradation by the proteasome.

The protein localises to the cytoplasm. It localises to the cytoplasmic vesicle. The enzyme catalyses S-ubiquitinyl-[E2 ubiquitin-conjugating enzyme]-L-cysteine + [acceptor protein]-L-lysine = [E2 ubiquitin-conjugating enzyme]-L-cysteine + N(6)-ubiquitinyl-[acceptor protein]-L-lysine.. It participates in protein modification; protein ubiquitination. Functionally, E3 ubiquitin-protein ligase which accepts ubiquitin from an E2 ubiquitin-conjugating enzyme in the form of a thioester and then directly transfers the ubiquitin to targeted substrates. The chain is Probable E3 ubiquitin-protein ligase HERC3 (HERC3) from Homo sapiens (Human).